The chain runs to 324 residues: tRNA N6-adenosine threonylcarbamoyltransferase (324 aa).

Fe cation is bound by residues H107, H111, and Y127. Substrate is bound by residues 127-131, D159, G172, E176, and N257; that span reads YVSGG. D285 lines the Fe cation pocket.

It belongs to the KAE1 / TsaD family. Monomer. Component of the KEOPS complex that consists of Kae1, Bud32, Cgi121 and Pcc1; the whole complex dimerizes. It depends on Fe(2+) as a cofactor.

It localises to the cytoplasm. It carries out the reaction L-threonylcarbamoyladenylate + adenosine(37) in tRNA = N(6)-L-threonylcarbamoyladenosine(37) in tRNA + AMP + H(+). Functionally, required for the formation of a threonylcarbamoyl group on adenosine at position 37 (t(6)A37) in tRNAs that read codons beginning with adenine. Is a component of the KEOPS complex that is probably involved in the transfer of the threonylcarbamoyl moiety of threonylcarbamoyl-AMP (TC-AMP) to the N6 group of A37. Kae1 likely plays a direct catalytic role in this reaction, but requires other protein(s) of the complex to fulfill this activity. This is tRNA N6-adenosine threonylcarbamoyltransferase from Pyrococcus furiosus (strain ATCC 43587 / DSM 3638 / JCM 8422 / Vc1).